We begin with the raw amino-acid sequence, 141 residues long: Nucleoside diphosphate kinase (141 aa).

The ATP site is built by lysine 11, phenylalanine 59, arginine 87, threonine 93, arginine 104, and asparagine 114. The active-site Pros-phosphohistidine intermediate is the histidine 117.

The protein belongs to the NDK family. Homotetramer. Mg(2+) serves as cofactor.

Its subcellular location is the cytoplasm. It carries out the reaction a 2'-deoxyribonucleoside 5'-diphosphate + ATP = a 2'-deoxyribonucleoside 5'-triphosphate + ADP. The enzyme catalyses a ribonucleoside 5'-diphosphate + ATP = a ribonucleoside 5'-triphosphate + ADP. In terms of biological role, major role in the synthesis of nucleoside triphosphates other than ATP. The ATP gamma phosphate is transferred to the NDP beta phosphate via a ping-pong mechanism, using a phosphorylated active-site intermediate. In Histophilus somni (strain 2336) (Haemophilus somnus), this protein is Nucleoside diphosphate kinase.